A 293-amino-acid chain; its full sequence is 4-hydroxy-tetrahydrodipicolinate synthase (293 aa).

A pyruvate-binding site is contributed by Thr47. The active-site Proton donor/acceptor is the Tyr135. The active-site Schiff-base intermediate with substrate is the Lys164. Position 205 (Ile205) interacts with pyruvate.

This sequence belongs to the DapA family. As to quaternary structure, homotetramer; dimer of dimers.

It is found in the cytoplasm. It catalyses the reaction L-aspartate 4-semialdehyde + pyruvate = (2S,4S)-4-hydroxy-2,3,4,5-tetrahydrodipicolinate + H2O + H(+). Its pathway is amino-acid biosynthesis; L-lysine biosynthesis via DAP pathway; (S)-tetrahydrodipicolinate from L-aspartate: step 3/4. In terms of biological role, catalyzes the condensation of (S)-aspartate-beta-semialdehyde [(S)-ASA] and pyruvate to 4-hydroxy-tetrahydrodipicolinate (HTPA). In Symbiobacterium thermophilum (strain DSM 24528 / JCM 14929 / IAM 14863 / T), this protein is 4-hydroxy-tetrahydrodipicolinate synthase.